A 201-amino-acid chain; its full sequence is Histidinol dehydrogenase (201 aa).

Belongs to the histidinol dehydrogenase family. In terms of assembly, homodimer. Requires Zn(2+) as cofactor.

The catalysed reaction is L-histidinol + 2 NAD(+) + H2O = L-histidine + 2 NADH + 3 H(+). It participates in amino-acid biosynthesis; L-histidine biosynthesis; L-histidine from 5-phospho-alpha-D-ribose 1-diphosphate: step 9/9. Functionally, catalyzes the sequential NAD-dependent oxidations of L-histidinol to L-histidinaldehyde and then to L-histidine. The chain is Histidinol dehydrogenase (hisD) from Buchnera aphidicola subsp. Schlechtendalia chinensis.